The sequence spans 333 residues: Holliday junction branch migration complex subunit RuvB (333 aa).

Positions 1-182 (MDERLLSGES…FGVLSRLEYY (182 aa)) are large ATPase domain (RuvB-L). ATP is bound by residues leucine 21, arginine 22, glycine 63, lysine 66, threonine 67, threonine 68, 129–131 (EDF), arginine 172, tyrosine 182, and arginine 219. Residue threonine 67 participates in Mg(2+) binding. Residues 183–253 (TVDQLSAIVE…ITQMALELLQ (71 aa)) are small ATPAse domain (RuvB-S). The interval 256–333 (KLGLDHIDHK…EHFGMEMPKV (78 aa)) is head domain (RuvB-H). Residues arginine 311 and arginine 316 each contribute to the DNA site.

This sequence belongs to the RuvB family. Homohexamer. Forms an RuvA(8)-RuvB(12)-Holliday junction (HJ) complex. HJ DNA is sandwiched between 2 RuvA tetramers; dsDNA enters through RuvA and exits via RuvB. An RuvB hexamer assembles on each DNA strand where it exits the tetramer. Each RuvB hexamer is contacted by two RuvA subunits (via domain III) on 2 adjacent RuvB subunits; this complex drives branch migration. In the full resolvosome a probable DNA-RuvA(4)-RuvB(12)-RuvC(2) complex forms which resolves the HJ.

It is found in the cytoplasm. The enzyme catalyses ATP + H2O = ADP + phosphate + H(+). The RuvA-RuvB-RuvC complex processes Holliday junction (HJ) DNA during genetic recombination and DNA repair, while the RuvA-RuvB complex plays an important role in the rescue of blocked DNA replication forks via replication fork reversal (RFR). RuvA specifically binds to HJ cruciform DNA, conferring on it an open structure. The RuvB hexamer acts as an ATP-dependent pump, pulling dsDNA into and through the RuvAB complex. RuvB forms 2 homohexamers on either side of HJ DNA bound by 1 or 2 RuvA tetramers; 4 subunits per hexamer contact DNA at a time. Coordinated motions by a converter formed by DNA-disengaged RuvB subunits stimulates ATP hydrolysis and nucleotide exchange. Immobilization of the converter enables RuvB to convert the ATP-contained energy into a lever motion, pulling 2 nucleotides of DNA out of the RuvA tetramer per ATP hydrolyzed, thus driving DNA branch migration. The RuvB motors rotate together with the DNA substrate, which together with the progressing nucleotide cycle form the mechanistic basis for DNA recombination by continuous HJ branch migration. Branch migration allows RuvC to scan DNA until it finds its consensus sequence, where it cleaves and resolves cruciform DNA. This Bacillus anthracis (strain A0248) protein is Holliday junction branch migration complex subunit RuvB.